The following is a 525-amino-acid chain: NGFI-A-binding protein 2 (525 aa).

Positions 1-22 (MHRAPSPTAEQPPGGGDSARRT) are disordered. Serine 6 carries the phosphoserine modification. The interval 35–113 (ALPRTLGELQ…REWATNPGLF (79 aa)) is NCD1. A disordered region spans residues 135-237 (GTRKGSMSNG…GGTGGGPDRL (103 aa)). Residues serine 157, serine 159, serine 162, and serine 171 each carry the phosphoserine modification. The span at 212–234 (AGGGVPEGTGAGGLAAGGTGGGP) shows a compositional bias: gly residues. The NCD2 stretch occupies residues 267-356 (LLKLNKKLAR…SRQVARESTY (90 aa)). Positions 353–384 (ESTYLSSLKGSRLHPEELGGPPLKKLKQEVGE) are necessary for nuclear localization. A Glycyl lysine isopeptide (Lys-Gly) (interchain with G-Cter in SUMO1) cross-link involves residue lysine 379. Positions 380 to 416 (QEVGEQSHPEIQQPPPGPESYVPPYRPSLEEDSASLS) are disordered. Serine 479 is subject to Phosphoserine. Residues 502–525 (PGPHPALVEGRRSSVKVEAEASRQ) form a disordered region. Basic and acidic residues predominate over residues 510–525 (EGRRSSVKVEAEASRQ). Lysine 517 participates in a covalent cross-link: Glycyl lysine isopeptide (Lys-Gly) (interchain with G-Cter in SUMO1); alternate. A Glycyl lysine isopeptide (Lys-Gly) (interchain with G-Cter in SUMO2); alternate cross-link involves residue lysine 517.

This sequence belongs to the NAB family. Homomultimers may associate with EGR1 bound to DNA. In terms of processing, sumoylation by EGR2 represses EGR2 transcriptional activity in hindbrain. In terms of tissue distribution, widely expressed at low levels. Highly expressed in melanoma cell lines.

It localises to the nucleus. Its function is as follows. Acts as a transcriptional repressor for zinc finger transcription factors EGR1 and EGR2. Isoform 2 lacks repression ability. The chain is NGFI-A-binding protein 2 (NAB2) from Homo sapiens (Human).